Here is a 101-residue protein sequence, read N- to C-terminus: NADH-quinone oxidoreductase subunit K (101 aa).

Helical transmembrane passes span leucine 4 to leucine 24, isoleucine 30 to phenylalanine 50, and isoleucine 61 to leucine 81.

Belongs to the complex I subunit 4L family. As to quaternary structure, NDH-1 is composed of 14 different subunits. Subunits NuoA, H, J, K, L, M, N constitute the membrane sector of the complex.

Its subcellular location is the cell inner membrane. It catalyses the reaction a quinone + NADH + 5 H(+)(in) = a quinol + NAD(+) + 4 H(+)(out). In terms of biological role, NDH-1 shuttles electrons from NADH, via FMN and iron-sulfur (Fe-S) centers, to quinones in the respiratory chain. The immediate electron acceptor for the enzyme in this species is believed to be ubiquinone. Couples the redox reaction to proton translocation (for every two electrons transferred, four hydrogen ions are translocated across the cytoplasmic membrane), and thus conserves the redox energy in a proton gradient. This chain is NADH-quinone oxidoreductase subunit K, found in Nitrosomonas eutropha (strain DSM 101675 / C91 / Nm57).